Here is a 479-residue protein sequence, read N- to C-terminus: DNA polymerase IV (479 aa).

The UmuC domain maps to isoleucine 7–glycine 189. Mg(2+) is bound by residues aspartate 11 and aspartate 105. Glutamate 106 is an active-site residue. Disordered stretches follow at residues alanine 357–tryptophan 400 and aspartate 430–proline 479. A compositionally biased stretch (basic and acidic residues) spans alanine 381–leucine 396.

The protein belongs to the DNA polymerase type-Y family. In terms of assembly, monomer. It depends on Mg(2+) as a cofactor.

It is found in the cytoplasm. It carries out the reaction DNA(n) + a 2'-deoxyribonucleoside 5'-triphosphate = DNA(n+1) + diphosphate. Functionally, poorly processive, error-prone DNA polymerase involved in untargeted mutagenesis. Copies undamaged DNA at stalled replication forks, which arise in vivo from mismatched or misaligned primer ends. These misaligned primers can be extended by PolIV. Exhibits no 3'-5' exonuclease (proofreading) activity. May be involved in translesional synthesis, in conjunction with the beta clamp from PolIII. This is DNA polymerase IV from Streptomyces coelicolor (strain ATCC BAA-471 / A3(2) / M145).